Here is a 30-residue protein sequence, read N- to C-terminus: Conopeptide Vi002 (30 aa).

As to expression, expressed by the venom gland.

The protein resides in the secreted. The polypeptide is Conopeptide Vi002 (Conus virgo (Virgin cone)).